A 238-amino-acid chain; its full sequence is uncharacterized protein (238 aa).

One can recognise an HTH gntR-type domain in the interval 1-68; that stretch reads MIYKSIAERL…HGSGTYLVRK (68 aa). Positions 28-47 form a DNA-binding region, H-T-H motif; sequence EKKLAEEFAVSRMTIRKAID.

This is an uncharacterized protein from Escherichia coli (strain K12).